The primary structure comprises 297 residues: HTH-type transcriptional regulator ArgP (297 aa).

An HTH lysR-type domain is found at 2–58 (FDYKLLSALAAVVEQAGFERAAQVLGLSQSAISQRIKLLEARVGQPVLVRGTPPSPT). The H-T-H motif DNA-binding region spans 19 to 38 (FERAAQVLGLSQSAISQRIK).

It belongs to the LysR transcriptional regulatory family. Homodimer.

Functionally, controls the transcription of genes involved in arginine and lysine metabolism. This Pseudomonas fluorescens (strain Pf0-1) protein is HTH-type transcriptional regulator ArgP.